The following is an 86-amino-acid chain: Large ribosomal subunit protein uL23c (86 aa).

It belongs to the universal ribosomal protein uL23 family. Part of the 50S ribosomal subunit.

The protein resides in the plastid. It localises to the chloroplast. Binds to 23S rRNA. The sequence is that of Large ribosomal subunit protein uL23c (rpl23) from Chlorella vulgaris (Green alga).